A 307-amino-acid chain; its full sequence is Exosome complex component RRP45A (307 aa).

The protein belongs to the RNase PH family. As to expression, expressed in roots, leaves, stems, buds and siliques.

It localises to the cytoplasm. The protein localises to the nucleus. Its function is as follows. Probable 3'-&gt;5' exoribonuclease involved in the regulation of cuticular wax biosynthesis. Can perform exosomal functions and partially complement the yeast rrp45 null mutant. This is Exosome complex component RRP45A from Arabidopsis thaliana (Mouse-ear cress).